Reading from the N-terminus, the 131-residue chain is Conotoxin Cal8.1 (131 aa).

Positions 1 to 19 (MKLLLTLLLGSALMCITLA) are cleaved as a signal peptide. Residues 20-38 (DECGLGTHRPVKEVIDNVR) constitute a propeptide that is removed on maturation.

In terms of processing, contains 4 disulfide bonds. Expressed by the venom duct.

It localises to the secreted. Its function is as follows. Probable neurotoxin with unknown target. Possibly targets ion channels. This Californiconus californicus (California cone) protein is Conotoxin Cal8.1.